The chain runs to 315 residues: Calumenin (315 aa).

A signal peptide spans 1 to 19 (MNKRPLLLCLGLWVACTLS). EF-hand domains are found at residues 68-103 (ESKERLGMIVGKIDLDNDGYVTEGELTAWIKKAQKK), 104-139 (YVYDNVERQWQEFDLSQDGLVSWDEYRNVTYGTYLD), 151-186 (QMMIRDERRFKMADKDGDLVATKEEFTAFLHPEEFD), 188-223 (MKDIVVLETMEDIDKNGDGLIDLEEYIGDMYNHDGD), 229-264 (WVKTEREQFMEFRDKNHDGKMDKEETKDWILPSDYD), and 265-300 (HSEAESRHLVYESDHNQDGKLTREEIVDKYDLFVGS). Residues Asp-81, Asp-83, Asp-85, Tyr-87, Glu-92, Asp-117, Ser-119, Asp-121, and Glu-128 each contribute to the Ca(2+) site. Asn-131 carries an N-linked (GlcNAc...) asparagine glycan. Residues Asp-164, Asp-166, Asp-168, Glu-175, Asp-201, Asn-203, Asp-205, Glu-212, Asp-242, Asn-244, Asp-246, Lys-248, Glu-253, Asp-278, Asn-280, Asp-282, Lys-284, and Glu-289 each coordinate Ca(2+). A Prevents secretion from ER motif is present at residues 312 to 315 (HDEF).

This sequence belongs to the CREC family. As to quaternary structure, interacts with ggcx.

It localises to the endoplasmic reticulum membrane. Its subcellular location is the golgi apparatus. The protein resides in the secreted. It is found in the melanosome. The protein localises to the sarcoplasmic reticulum lumen. In terms of biological role, involved in regulation of vitamin K-dependent carboxylation of multiple N-terminal glutamate residues. Seems to inhibit gamma-carboxylase ggcx. Binds 7 calcium ions with a low affinity. This chain is Calumenin (calu), found in Xenopus laevis (African clawed frog).